A 240-amino-acid polypeptide reads, in one-letter code: Ribosomal RNA small subunit methyltransferase G (240 aa).

Residues glycine 77, phenylalanine 82, alanine 128 to glutamate 129, and arginine 148 each bind S-adenosyl-L-methionine. Residues glutamate 217 to lysine 240 are disordered.

This sequence belongs to the methyltransferase superfamily. RNA methyltransferase RsmG family.

It localises to the cytoplasm. In terms of biological role, specifically methylates the N7 position of guanine in position 535 of 16S rRNA. The sequence is that of Ribosomal RNA small subunit methyltransferase G from Staphylococcus carnosus (strain TM300).